Consider the following 545-residue polypeptide: Chaperonin GroEL 1 (545 aa).

ATP-binding positions include 30 to 33 (TLGP), lysine 51, 87 to 91 (DGTTT), glycine 415, and aspartate 495.

This sequence belongs to the chaperonin (HSP60) family. As to quaternary structure, forms a cylinder of 14 subunits composed of two heptameric rings stacked back-to-back. Interacts with the co-chaperonin GroES.

It is found in the cytoplasm. It carries out the reaction ATP + H2O + a folded polypeptide = ADP + phosphate + an unfolded polypeptide.. Functionally, together with its co-chaperonin GroES, plays an essential role in assisting protein folding. The GroEL-GroES system forms a nano-cage that allows encapsulation of the non-native substrate proteins and provides a physical environment optimized to promote and accelerate protein folding. This Rhizobium meliloti (strain 1021) (Ensifer meliloti) protein is Chaperonin GroEL 1.